The chain runs to 437 residues: Transcription factor AP-2-alpha (437 aa).

A Glycyl lysine isopeptide (Lys-Gly) (interchain with G-Cter in SUMO); alternate cross-link involves residue lysine 10. Lysine 10 participates in a covalent cross-link: Glycyl lysine isopeptide (Lys-Gly) (interchain with G-Cter in SUMO2); alternate. The disordered stretch occupies residues 14 to 107 (CEDRHDGASN…GQRQSQESGL (94 aa)). The PPxY motif signature appears at 57–62 (YFPPPY). 2 stretches are compositionally biased toward low complexity: residues 65 to 74 (IYPQSQDPYS) and 88 to 101 (QPQP…GQRQ). Residues lysine 177 and lysine 184 each participate in a glycyl lysine isopeptide (Lys-Gly) (interchain with G-Cter in SUMO2) cross-link. Serine 239 is modified (phosphoserine; by PKA). The H-S-H (helix-span-helix), dimerization stretch occupies residues 280 to 410 (RRKAANVTLL…YLTEALKAMD (131 aa)). Residues 414–427 (LSNNPNSHTDNNAK) are compositionally biased toward polar residues. Residues 414 to 437 (LSNNPNSHTDNNAKSSDKEEKHRK) form a disordered region. Over residues 428–437 (SSDKEEKHRK) the composition is skewed to basic and acidic residues.

This sequence belongs to the AP-2 family. In terms of assembly, binds DNA as a dimer. Can form homodimers or heterodimers with other AP-2 family members. Interacts with WWOX. Interacts with CITED4. Interacts with UBE2I. Interacts with RALBP1 in a complex also containing EPN1 and NUMB during interphase and mitosis. Interacts with KCTD1; this interaction represses transcription activation. Interacts (via C-terminus) with CITED2 (via C-terminus); the interaction stimulates TFAP2A-transcriptional activation. Interacts (via N-terminus) with EP300 (via N-terminus); the interaction requires CITED2. Interacts with KCTD15; this interaction inhibits TFAP2A transcriptional activation. Sumoylated on Lys-10; which inhibits transcriptional activity.

The protein resides in the nucleus. In terms of biological role, sequence-specific DNA-binding protein that interacts with inducible viral and cellular enhancer elements to regulate transcription of selected genes. AP-2 factors bind to the consensus sequence 5'-GCCNNNGGC-3' and activate genes involved in a large spectrum of important biological functions including proper eye, face, body wall, limb and neural tube development. They also suppress a number of genes including MCAM/MUC18, C/EBP alpha and MYC. AP-2-alpha is the only AP-2 protein required for early morphogenesis of the lens vesicle. Together with the CITED2 coactivator, stimulates the PITX2 P1 promoter transcription activation. Associates with chromatin to the PITX2 P1 promoter region. The protein is Transcription factor AP-2-alpha (TFAP2A) of Bos taurus (Bovine).